A 1286-amino-acid polypeptide reads, in one-letter code: MRRLICKRICDYKSFDDEESVDGNRPSSAASAFKVPAPKTPGNPVNSARKPGSAGGPKAGGTSKEGGAGAVDEDDFIKAFTDVPSIQIYSSRELEETLNKIREILSDDKHDWDQRANALKKIRSLLVAGAAQYDCFFQHLRLLDGALKLSAKDLRSQVVREACITVAHLSTVLGNKFDHGAEAIVPTLFNLVPNSAKVMATSGCAAIRFIIRHTHVPRLIPLITSNCTSKSVPVRRRSFEFLDLLLQEWQTHSLERHAAVLVETIKKGIHDADAEARVEARKTYMGLRNHFPGEAETLYNSLEPSYQKSLQTYLKSSGSVASLPQSDRSSSSSQESLNRPFSSKWSTANPSAVAGRVSVGGSKASPLPGSLQRSRSDIDVNAAAGAKAHHAAGQAVRSGRLGAGALNPGSYASLEDTSDKMDGTASEDGRVRAKLSTPLVAVGNAKTDSRGRSRTKMVSQSQPGSRSGSPGRVLTTTALSTVSSGAQRILVNSASAQKRSKIPRSQGCSREASPSRLSVARSSRIPRPSVSQGCSREASRESSRDTSPVRSFQPLGPGYGMSQSSRLSSSVSAMRVLNTGSDVEEAVADALLLGDIRTKKKPARRRYESYGMHSDDDANSDASSACSERSYSSRNGSIPTYMRQTEDVAEVLNRCASSNWSERKEGLLGLQNLLKNQRTLSRVELKRLCEIFTRMFADPHGKVFSMFLETLVDFIQVHKDDLQDWLFVLLTQLLKKMGADLLGSVQAKVQKALDVTRESFPNDLQFNILMRFTVDQTQTPSLKVKVAILKYIETLAKQMDPGDFINSSETRLAVSRVITWTTEPKSSDVRKAAQSVLISLFELNTPEFTMLLGALPKTFQDGATKLLHNHLRNTGNGTQSSMGSPLTRPTPRSPANWSSPLTSPTNTSQNTLSPSAFDYDTENMNSEDIYSSLRGVTEAIQNFSFRSQEDMSEPLKRDPKKEDGDTVCSGPGMSDPRAGGDAPDSSQPALDNKASLLHSVPLHSSPRSRDYNPYNYSDSISPFNKSALKEAMFDDDADQFPDDLSLDHSDLVAELLKELSNHNERIEERKIALYELMKLTQEESFSVWDEHFKTILLLLLETLGDKEPTIRALALKVLKEILRHQPARFKNYAELTVMKTLEAHKDPHKEVVRSAEEAASVLATSISPEQCIKVLCPIIQTADYPINLAAIKMQTKVIERVSKETLNLLLPEIMPGLIQGYDNSESSVRKACVFCLVAVHAVIGDELKPHLSQLTGSKMKLLNLYIKRAQTGSAGADPTTDVSGQS.

Residues 1 to 40 are golgi localization; sequence MRRLICKRICDYKSFDDEESVDGNRPSSAASAFKVPAPKT. Phosphoserine occurs at positions 14 and 20. The tract at residues 17–70 is disordered; that stretch reads DEESVDGNRPSSAASAFKVPAPKTPGNPVNSARKPGSAGGPKAGGTSKEGGAGA. Over residues 53 to 69 the composition is skewed to gly residues; that stretch reads SAGGPKAGGTSKEGGAG. The segment at 66-317 is TOG 1; it reads GGAGAVDEDD…KSLQTYLKSS (252 aa). HEAT repeat units follow at residues 179–214, 215–251, and 256–293; these read HGAEAIVPTLFNLVPNSAKVMATSGCAAIRFIIRHT, HVPRLIPLITSNCTSKSVPVRRRSFEFLDLLLQEWQT, and RHAAVLVETIKKGIHDADAEARVEARKTYMGLRNHFPG. Disordered regions lie at residues 320-350 and 355-374; these read VASLPQSDRSSSSSQESLNRPFSSKWSTANP and GRVSVGGSKASPLPGSLQRS. 3 positions are modified to phosphoserine: Ser-322, Ser-333, and Ser-336. Residues 322-340 are compositionally biased toward low complexity; it reads SLPQSDRSSSSSQESLNRP. A compositionally biased stretch (polar residues) spans 341–350; the sequence is FSSKWSTANP. 3 positions are modified to phosphoserine: Ser-374, Ser-376, and Ser-413. Residues 410-473 form a disordered region; that stretch reads SYASLEDTSD…GSRSGSPGRV (64 aa). The segment covering 417-431 has biased composition (basic and acidic residues); it reads TSDKMDGTASEDGRV. The segment at 450–565 is interaction with microtubules, MAPRE1 and MAPRE3; the sequence is RGRSRTKMVS…GPGYGMSQSS (116 aa). Over residues 459 to 473 the composition is skewed to low complexity; that stretch reads SQSQPGSRSGSPGRV. Phosphoserine occurs at positions 461, 465, 469, 484, and 495. A disordered region spans residues 492 to 566; it reads NSASAQKRSK…PGYGMSQSSR (75 aa). Positions 500–503 match the SXIP motif 1; mediates interaction with MAPRE1 and targeting to microtubule plus ends motif; that stretch reads SKIP. Ser-513 carries the post-translational modification Phosphoserine. The short motif at 523 to 526 is the SXIP motif 2; mediates interaction with MAPRE1 and targeting to microtubule plus ends element; the sequence is SRIP. Phosphoserine is present on residues Ser-531, Ser-535, Ser-570, Ser-572, Ser-581, Ser-614, and Ser-620. Over residues 606-616 the composition is skewed to basic and acidic residues; the sequence is RYESYGMHSDD. Residues 606–638 are disordered; that stretch reads RYESYGMHSDDDANSDASSACSERSYSSRNGSI. The segment covering 620–634 has biased composition (low complexity); that stretch reads SDASSACSERSYSSR. The interval 642-873 is TOG 2; the sequence is MRQTEDVAEV…TKLLHNHLRN (232 aa). HEAT repeat units lie at residues 702–739 and 764–801; these read KVFSMFLETLVDFIQVHKDDLQDWLFVLLTQLLKKMGA and LQFNILMRFTVDQTQTPSLKVKVAILKYIETLAKQMDP. Position 779 is a phosphothreonine (Thr-779). Residues 864–1286 form an interaction with RSN and localization to the Golgi and kinetochores region; that stretch reads TKLLHNHLRN…DPTTDVSGQS (423 aa). 2 disordered regions span residues 870–920 and 944–990; these read HLRN…FDYD and SFRS…QPAL. 2 stretches are compositionally biased toward polar residues: residues 872–884 and 893–914; these read RNTGNGTQSSMGS and SPANWSSPLTSPTNTSQNTLSP. Ser-884 carries the post-translational modification Phosphoserine. Phosphoserine is present on residues Ser-944, Ser-947, Ser-1005, and Ser-1021. A compositionally biased stretch (basic and acidic residues) spans 947–964; sequence SQEDMSEPLKRDPKKEDG. Positions 1009-1286 are required for cortical localization; the sequence is RDYNPYNYSD…DPTTDVSGQS (278 aa). 3 HEAT repeats span residues 1046–1083, 1090–1127, and 1208–1245; these read LDHSDLVAELLKELSNHNERIEERKIALYELMKLTQEE, EHFKTILLLLLETLGDKEPTIRALALKVLKEILRHQPA, and LLLPEIMPGLIQGYDNSESSVRKACVFCLVAVHAVIGD.

Belongs to the CLASP family. In terms of assembly, interacts with microtubules. Interacts with MAPRE1; probably required for targeting to the growing microtubule plus ends. Interacts with CLIP2, ERC1, MAPRE3, PHLDB2 and RSN. The interaction with ERC1 may be mediated by PHLDB2. Interacts with GCC2; recruits CLASP2 to Golgi membranes. Interacts with MACF1. Interacts with SOGA1 and MTCL1. In terms of processing, phosphorylated by GSK3B. Phosphorylation by GSK3B may negatively regulate binding to microtubule lattices in lamella.

Its subcellular location is the cytoplasm. The protein resides in the cytoskeleton. It is found in the microtubule organizing center. It localises to the centrosome. The protein localises to the chromosome. Its subcellular location is the centromere. The protein resides in the kinetochore. It is found in the spindle. It localises to the golgi apparatus. The protein localises to the trans-Golgi network. Its subcellular location is the cell membrane. The protein resides in the cell projection. It is found in the ruffle membrane. It localises to the cell cortex. Its function is as follows. Microtubule plus-end tracking protein that promotes the stabilization of dynamic microtubules. Involved in the nucleation of noncentrosomal microtubules originating from the trans-Golgi network (TGN). Required for the polarization of the cytoplasmic microtubule arrays in migrating cells towards the leading edge of the cell. May act at the cell cortex to enhance the frequency of rescue of depolymerizing microtubules by attaching their plus-ends to cortical platforms composed of ERC1 and PHLDB2. This cortical microtubule stabilizing activity is regulated at least in part by phosphatidylinositol 3-kinase signaling. Also performs a similar stabilizing function at the kinetochore which is essential for the bipolar alignment of chromosomes on the mitotic spindle. Acts as a mediator of ERBB2-dependent stabilization of microtubules at the cell cortex. The polypeptide is CLIP-associating protein 2 (Clasp2) (Rattus norvegicus (Rat)).